The sequence spans 564 residues: MFS-type transporter dmxR4 (564 aa).

The disordered stretch occupies residues 1-61 (MSSERPDGSA…PAKEAPAKPA (61 aa)). A compositionally biased stretch (polar residues) spans 25-44 (TDSSRTSNDASQTSQDTAVQ). Basic and acidic residues predominate over residues 47–57 (PPKEAPAKEAP). The next 5 helical transmembrane spans lie at 71 to 91 (IALL…DRSI), 106 to 126 (AGDI…FQLL), 138 to 158 (TVFV…GAAP), 169 to 189 (LAGI…VFLI), and 199 to 219 (GLFG…GGGF). N-linked (GlcNAc...) asparagine glycosylation is present at N222. 7 helical membrane passes run 227–247 (WCFY…ALWM), 265–285 (GLDL…LLAL), 299–319 (IIAL…LQAF), 348–368 (GVHL…GGFF), 376–396 (SPLA…IYTF), 405–425 (WIGS…APNL), and 438–458 (SALA…VSVG). N469 is a glycosylation site (N-linked (GlcNAc...) asparagine). 2 helical membrane-spanning segments follow: residues 470-490 (LSWI…VSFL) and 512-532 (VFMI…SMEW). Residues 534–564 (SVKSRGSWDEKPAAKPTDKPTEEKKVPPEAV) are disordered. Residues 539 to 564 (GSWDEKPAAKPTDKPTEEKKVPPEAV) are compositionally biased toward basic and acidic residues.

Belongs to the major facilitator superfamily. TCR/Tet family.

The protein resides in the membrane. In terms of biological role, MFS-type transporter; part of the gene cluster that mediates the biosynthesis of the dimeric xanthones cryptosporioptides. This Cryptosporiopsis sp. (strain 8999) protein is MFS-type transporter dmxR4.